A 40-amino-acid polypeptide reads, in one-letter code: Mu-thomitoxin-Hme1b (40 aa).

3 disulfides stabilise this stretch: Cys2–Cys18, Cys9–Cys22, and Cys17–Cys33.

The protein belongs to the neurotoxin 19 (CSTX) family. Post-translationally, contains 3 disulfide bonds. In terms of tissue distribution, expressed by the venom gland.

The protein localises to the secreted. Blocks the Nav1.2/SCN2A, Nav1.4/SCN4A, Nav1.5/SCN5A and Nav1.6/SCN8A sodium channels. Shows a slight preference for the Nav1.2 and Nav1.4 channels. Reduces the peak amplitude of the sodium current and negatively shifts the steady-state inactivation process. Does not shift the threshold potential of activation or the voltage corresponding to maximal current. Does not change the reversal potential of the sodium current. May act on site 1 of the receptor. This is Mu-thomitoxin-Hme1b from Heriaeus mellotteei (Crab spider).